A 649-amino-acid polypeptide reads, in one-letter code: Echinoderm microtubule-associated protein-like 2 (649 aa).

Positions 10–649 are tandem atypical propeller in EMLs; the sequence is KEVIFSVEDG…DTSVLQWRVV (640 aa). Coiled-coil stretches lie at residues 13-58 and 73-114; these read IFSV…LKLE and YLLP…LAIH. WD repeat units follow at residues 56-93, 97-144, 151-192, 195-234, 241-280, 285-323, 369-406, 410-447, 452-489, 495-535, 564-602, and 609-648; these read KLEWVYGYRGRDCRANLYLLPTGEIVYFVASVAVLYSV, RQRH…IWDS, HVLG…VWDW, ETKVVDVKCSNEAVLVATFHPTDPTVLITCGKSHIYFWTL, KRQGLFEKHEKPKYVLCVTFLEGGDVVTGDSGGNLYVWGK, ITQAVLGAHDGGVFGLCALRDGTLVSGGGRDRRVVLWGS, FSLLVQGHVEELWGLATHPSRAQFVTCGQDKLVHLWSS, QPLWSRIIEDPARSAGFHPSGSVLAVGTVTGRWLLLDT, LVAIHTDGNEQISVVSFSPDGAYLAVGSHDNLVYVYTV, KVSR…YWDP, FGIWSEGADGTDINAVARSHDGKLLASADDFGKVHLFSY, and ALSHKYGGHSSHVTNVAFLWDDSMALTTGGKDTSVLQWRV.

The protein belongs to the WD repeat EMAP family. In terms of assembly, homotrimer; self-association is mediated by the N-terminal coiled coil. As to quaternary structure, interacts with GRID2 and may also interact with GRID1. Interacts with EML3. Binds unpolymerized tubulins via its WD repeat region. In terms of tissue distribution, ubiquitous.

The protein resides in the cytoplasm. The protein localises to the cytoskeleton. It is found in the spindle. Functionally, tubulin binding protein that inhibits microtubule nucleation and growth, resulting in shorter microtubules. In Homo sapiens (Human), this protein is Echinoderm microtubule-associated protein-like 2 (EML2).